We begin with the raw amino-acid sequence, 671 residues long: DNA ligase (671 aa).

NAD(+) is bound by residues 32–36, 81–82, and Glu-113; these read DAEYD and SL. The active-site N6-AMP-lysine intermediate is the Lys-115. Residues Arg-136, Glu-173, Lys-290, and Lys-314 each coordinate NAD(+). Zn(2+)-binding residues include Cys-408, Cys-411, Cys-426, and Cys-432. One can recognise a BRCT domain in the interval 593–671; that stretch reads EIDSPFAGKT…EAEMIRLLGA (79 aa).

It belongs to the NAD-dependent DNA ligase family. LigA subfamily. Requires Mg(2+) as cofactor. It depends on Mn(2+) as a cofactor.

It carries out the reaction NAD(+) + (deoxyribonucleotide)n-3'-hydroxyl + 5'-phospho-(deoxyribonucleotide)m = (deoxyribonucleotide)n+m + AMP + beta-nicotinamide D-nucleotide.. Functionally, DNA ligase that catalyzes the formation of phosphodiester linkages between 5'-phosphoryl and 3'-hydroxyl groups in double-stranded DNA using NAD as a coenzyme and as the energy source for the reaction. It is essential for DNA replication and repair of damaged DNA. The polypeptide is DNA ligase (Salmonella paratyphi C (strain RKS4594)).